Here is a 660-residue protein sequence, read N- to C-terminus: DNA mismatch repair protein MutL (660 aa).

The disordered stretch occupies residues 414 to 433; the sequence is SSVKHASRPQNTFTETDHPN.

The protein belongs to the DNA mismatch repair MutL/HexB family.

This protein is involved in the repair of mismatches in DNA. It is required for dam-dependent methyl-directed DNA mismatch repair. May act as a 'molecular matchmaker', a protein that promotes the formation of a stable complex between two or more DNA-binding proteins in an ATP-dependent manner without itself being part of a final effector complex. This chain is DNA mismatch repair protein MutL, found in Streptococcus pyogenes serotype M5 (strain Manfredo).